Consider the following 789-residue polypeptide: Protein translocase subunit SecA 2 (789 aa).

Residues Gln-79, 97 to 101 (GEGKT), and Asp-487 contribute to the ATP site.

It belongs to the SecA family. As to quaternary structure, monomer and homodimer. Part of the essential Sec protein translocation apparatus which comprises SecA, SecYEG and auxiliary proteins SecDF. Other proteins may also be involved.

Its subcellular location is the cell membrane. It is found in the cytoplasm. The enzyme catalyses ATP + H2O + cellular proteinSide 1 = ADP + phosphate + cellular proteinSide 2.. Functionally, part of the Sec protein translocase complex. Interacts with the SecYEG preprotein conducting channel. Has a central role in coupling the hydrolysis of ATP to the transfer of proteins into and across the cell membrane, serving as an ATP-driven molecular motor driving the stepwise translocation of polypeptide chains across the membrane. This chain is Protein translocase subunit SecA 2, found in Pediococcus pentosaceus (strain ATCC 25745 / CCUG 21536 / LMG 10740 / 183-1w).